The sequence spans 483 residues: Nuc-1 negative regulatory protein preg (483 aa).

Composition is skewed to low complexity over residues 1–32 (MLTR…PRPS), 60–80 (SSRR…PISI), and 176–200 (ASAL…AVAV). Disordered regions lie at residues 1-112 (MLTR…SRPQ), 164-234 (NTVG…SQGD), and 434-483 (CPEP…RHAT). Positions 435-473 (PEPEEADDEDEDEELDESDAIGDDDDDIDGEGGEREEET) are enriched in acidic residues.

It belongs to the cyclin family.

In terms of biological role, negative regulator, together with pgov, of the transcriptional activator nuc-1, which controls the expression of phosphorous acquisition enzymes. The protein is Nuc-1 negative regulatory protein preg (preg) of Neurospora crassa (strain ATCC 24698 / 74-OR23-1A / CBS 708.71 / DSM 1257 / FGSC 987).